The chain runs to 368 residues: 3-dehydroquinate synthase (368 aa).

Residues 71-76 (DGESFK), 105-109 (GVIGD), 129-130 (TT), lysine 142, lysine 151, and 169-172 (TLRT) each bind NAD(+). Residues glutamate 184, histidine 247, and histidine 264 each coordinate Zn(2+).

This sequence belongs to the sugar phosphate cyclases superfamily. Dehydroquinate synthase family. It depends on NAD(+) as a cofactor. Co(2+) serves as cofactor. Zn(2+) is required as a cofactor.

It is found in the cytoplasm. The enzyme catalyses 7-phospho-2-dehydro-3-deoxy-D-arabino-heptonate = 3-dehydroquinate + phosphate. The protein operates within metabolic intermediate biosynthesis; chorismate biosynthesis; chorismate from D-erythrose 4-phosphate and phosphoenolpyruvate: step 2/7. Its function is as follows. Catalyzes the conversion of 3-deoxy-D-arabino-heptulosonate 7-phosphate (DAHP) to dehydroquinate (DHQ). The sequence is that of 3-dehydroquinate synthase from Ralstonia nicotianae (strain ATCC BAA-1114 / GMI1000) (Ralstonia solanacearum).